Consider the following 311-residue polypeptide: Olfactory receptor 4K1 (311 aa).

The Extracellular portion of the chain corresponds to 1–25 (MAHTNESMVSEFVLLGLSNSWGLQL). The N-linked (GlcNAc...) asparagine glycan is linked to Asn-5. A helical transmembrane segment spans residues 26-49 (FFFAIFSIVYVTSVLGNVLIIVII). Over 50-57 (SFDSHLNS) the chain is Cytoplasmic. Residues 58–79 (PMYFLLSNLSFIDICQSNFATP) form a helical membrane-spanning segment. Over 80-100 (KMLVDFFIERKTISFEGCMAQ) the chain is Extracellular. Cys-97 and Cys-189 are joined by a disulfide. Residues 101-120 (IFVLHSFVGSEMMLLVAMAY) form a helical membrane-spanning segment. Over 121–139 (DRFIAICKPLHYSTIMNRR) the chain is Cytoplasmic. Residues 140 to 158 (LCVIFVSISWAVGVLHSVS) form a helical membrane-spanning segment. Residues 159-195 (HLAFTVDLPFCGPNEVDSFFCDLPLVIELACMDTYEM) lie on the Extracellular side of the membrane. Residues 196–219 (EIMTLTNSGLISLSCFLALIISYT) form a helical membrane-spanning segment. Residues 220-235 (IILIGVRCRSSSGSSK) are Cytoplasmic-facing. Residues 236 to 258 (ALSTLTAHITVVILFFGPCIYFY) form a helical membrane-spanning segment. The Extracellular portion of the chain corresponds to 259–269 (IWPFSRLPVDK). A helical membrane pass occupies residues 270 to 289 (FLSVFYTVCTPLLNPIIYSL). The Cytoplasmic portion of the chain corresponds to 290–311 (RNEDVKAAMWKLRNRHVNSWKN).

This sequence belongs to the G-protein coupled receptor 1 family.

It is found in the cell membrane. Its function is as follows. Odorant receptor. This is Olfactory receptor 4K1 (OR4K1) from Homo sapiens (Human).